Reading from the N-terminus, the 496-residue chain is 2-methylcitrate dehydratase-like protein oryR (496 aa).

It belongs to the PrpD family.

It functions in the pathway secondary metabolite biosynthesis. 2-methylcitrate dehydratase-like protein; part of the gene cluster that mediates the biosynthesis of oryzines, natural products with an unusual maleidride backbone. The two subunits of the fungal fatty acid synthase oryfasA and oryfasB probably form octenoic acid. This fatty acid is most likely activated by the acyl-CoA ligase oryP to give octenyl-CoA before the citrate synthase-like protein oryE catalyzes condensation with oxaloacetate to form tricarboxylic acid. The next steps of the pathways are conjectural, but a favorite possible route has been proposed, beginning with decarboxylation and concomitant dehydration by the decarboxylase oryM, followed by tautomerization, which may lead to the production of a diene intermediate. Reduction of this diene intermediate could give the known metabolite piliformic acid. On the pathway to oryzine B and oryzine A, however, hydroxylation of the diene by the alpha-ketoglutarate-dependent dioxygenase oryG and lactonisation by the lactonohydrolases oryH or oryL could give oryzine B directly. Finally, enoyl reduction by the dehydrogenase oryD would then convert oryzine B into oryzine A. The sequence is that of 2-methylcitrate dehydratase-like protein oryR from Aspergillus oryzae (strain ATCC 42149 / RIB 40) (Yellow koji mold).